We begin with the raw amino-acid sequence, 286 residues long: Probable biotin transporter (286 aa).

EamA domains follow at residues 3–128 (YLLF…AIIR) and 139–277 (GFLL…LWVN). The next 10 helical transmembrane spans lie at 4–24 (LLFV…YLAG), 26–46 (VDSY…FLPL), 56–76 (FVGG…VCLY), 81–101 (VLTV…VALF), 109–129 (FNFW…IIRY), 136–156 (FLQG…GQVL), 174–194 (FGYF…LFGD), 203–223 (LQWG…QFWW), 234–254 (TLAV…LLIW), and 258–280 (ADLP…NRLG).

This sequence belongs to the drug/metabolite transporter (DMT) superfamily. 10 TMS drug/metabolite exporter (DME) (TC 2.A.7.3) family.

Its subcellular location is the cell inner membrane. The catalysed reaction is biotin(in) = biotin(out). Its function is as follows. Uptake of biotin. The polypeptide is Probable biotin transporter (Pseudomonas aeruginosa (strain ATCC 15692 / DSM 22644 / CIP 104116 / JCM 14847 / LMG 12228 / 1C / PRS 101 / PAO1)).